A 299-amino-acid chain; its full sequence is Rhodanese-like/PpiC domain-containing protein 12, chloroplastic (299 aa).

The transit peptide at 1–81 directs the protein to the chloroplast; the sequence is MFRVTGTLSA…SGFPALKMRA (81 aa). Ser82 carries the N-acetylserine modification. A PpiC domain is found at 93-183; it reads SREILVQHLL…FGLHLLQVLS (91 aa). Residues 205–297 form the Rhodanese domain; sequence FMDEAQLIDV…YSLKVDPSIP (93 aa). Catalysis depends on Cys257, which acts as the Cysteine persulfide intermediate.

It localises to the plastid. Its subcellular location is the chloroplast. The protein is Rhodanese-like/PpiC domain-containing protein 12, chloroplastic of Arabidopsis thaliana (Mouse-ear cress).